A 210-amino-acid polypeptide reads, in one-letter code: Imidazole glycerol phosphate synthase subunit HisH (210 aa).

A Glutamine amidotransferase type-1 domain is found at 7 to 210; it reads KVVIIDTGCA…SQLIKNFLEM (204 aa). Cys-82 (nucleophile) is an active-site residue. Residues His-192 and Glu-194 contribute to the active site.

As to quaternary structure, heterodimer of HisH and HisF.

Its subcellular location is the cytoplasm. It catalyses the reaction 5-[(5-phospho-1-deoxy-D-ribulos-1-ylimino)methylamino]-1-(5-phospho-beta-D-ribosyl)imidazole-4-carboxamide + L-glutamine = D-erythro-1-(imidazol-4-yl)glycerol 3-phosphate + 5-amino-1-(5-phospho-beta-D-ribosyl)imidazole-4-carboxamide + L-glutamate + H(+). The enzyme catalyses L-glutamine + H2O = L-glutamate + NH4(+). It participates in amino-acid biosynthesis; L-histidine biosynthesis; L-histidine from 5-phospho-alpha-D-ribose 1-diphosphate: step 5/9. IGPS catalyzes the conversion of PRFAR and glutamine to IGP, AICAR and glutamate. The HisH subunit catalyzes the hydrolysis of glutamine to glutamate and ammonia as part of the synthesis of IGP and AICAR. The resulting ammonia molecule is channeled to the active site of HisF. The chain is Imidazole glycerol phosphate synthase subunit HisH from Photobacterium profundum (strain SS9).